The chain runs to 142 residues: Baculoviral IAP repeat-containing protein 5 (142 aa).

The BIR repeat unit spans residues 18-88 (RIYTFKNWPF…KHSPGCAFLT (71 aa)). Lys23 carries the post-translational modification N6-acetyllysine. At Thr34 the chain carries Phosphothreonine; by CDK1 and CDK15. The residue at position 48 (Thr48) is a Phosphothreonine. Cys57, Cys60, His77, and Cys84 together coordinate Zn(2+). An N6-acetyllysine mark is found at Lys90, Lys110, Lys112, and Lys115. Thr117 is subject to Phosphothreonine; by AURKB.

It belongs to the IAP family. Monomer or homodimer. Exists as a homodimer in the apo state and as a monomer in the CPC-bound state. The monomer protects cells against apoptosis more efficiently than the dimer. Only the dimeric form is capable of enhancing tubulin stability in cells. When phosphorylated, interacts with LAMTOR5/HBXIP; the resulting complex binds pro-CASP9, as well as active CASP9, but much less efficiently. Component of the chromosomal passenger complex (CPC) composed of at least BIRC5/survivin, CDCA8/borealin, INCENP, AURKB or AURKC; in the complex forms a triple-helix bundle-based subcomplex with INCENP and CDCA8. Interacts with JTB. Interacts (via BIR domain) with histone H3 phosphorylated at 'Thr-3' (H3pT3). Interacts with EVI5. Interacts with GTP-bound RAN in both the S and M phases of the cell cycle. Interacts with USP9X. Interacts with tubulin. Interacts with BIRC2/c-IAP1. The monomeric form interacts with XIAP/BIRC4. Both the dimeric and monomeric form can interact with DIABLO/SMAC. Interacts with BIRC6/bruce. Interacts with FBXL7; this interaction facilitates the polyubiquitination and subsequent proteasomal degradation of BIRC5 by the SCF(FBXL7) E3 ubiquitin-protein ligase complex. Post-translationally, ubiquitinated by the Cul9-RING ubiquitin-protein ligase complex, leading to its degradation. Ubiquitination is required for centrosomal targeting. Deubiquitinated by USP35 or USP38; leading to stabilization. In terms of processing, in vitro phosphorylation at Thr-117 by AURKB prevents interaction with INCENP and localization to mitotic chromosomes. Phosphorylation at Thr-48 by CK2 is critical for its mitotic and anti-apoptotic activities. Phosphorylation at Thr-34 by CDK15 is critical for its anti-apoptotic activity.

It is found in the cytoplasm. The protein resides in the nucleus. Its subcellular location is the chromosome. The protein localises to the centromere. It localises to the cytoskeleton. It is found in the spindle. The protein resides in the kinetochore. Its subcellular location is the midbody. Functionally, multitasking protein that has dual roles in promoting cell proliferation and preventing apoptosis. Component of a chromosome passage protein complex (CPC) which is essential for chromosome alignment and segregation during mitosis and cytokinesis. Acts as an important regulator of the localization of this complex; directs CPC movement to different locations from the inner centromere during prometaphase to midbody during cytokinesis and participates in the organization of the center spindle by associating with polymerized microtubules. Involved in the recruitment of CPC to centromeres during early mitosis via association with histone H3 phosphorylated at 'Thr-3' (H3pT3) during mitosis. The complex with RAN plays a role in mitotic spindle formation by serving as a physical scaffold to help deliver the RAN effector molecule TPX2 to microtubules. May counteract a default induction of apoptosis in G2/M phase. The acetylated form represses STAT3 transactivation of target gene promoters. May play a role in neoplasia. Inhibitor of CASP3 and CASP7. Essential for the maintenance of mitochondrial integrity and function. This is Baculoviral IAP repeat-containing protein 5 (Birc5) from Rattus norvegicus (Rat).